Consider the following 254-residue polypeptide: O-antigen biosynthesis glycosyltransferase WbnJ (254 aa).

This sequence belongs to the glycosyltransferase 2 family.

The catalysed reaction is an N-acetyl-alpha-D-galactosaminyl derivative + UDP-alpha-D-galactose = a beta-D-galactosyl-(1-&gt;3)-N-acetyl-alpha-D-galactosaminyl derivative + UDP + H(+). The enzyme catalyses alpha-D-GalNAc-(1-&gt;3)-alpha-D-GalNAc-di-trans,octa-cis-undecaprenyl diphosphate + UDP-alpha-D-galactose = beta-D-Gal-(1-&gt;3)-alpha-D-GalNAc-(1-&gt;3)-alpha-D-GalNAc-di-trans,octa-cis-undecaprenyl diphosphate + UDP + H(+). It participates in bacterial outer membrane biogenesis; LPS O-antigen biosynthesis. Its function is as follows. Involved in the assembly of the O-repeating unit during O-antigen biosynthesis. This Escherichia coli protein is O-antigen biosynthesis glycosyltransferase WbnJ.